Consider the following 185-residue polypeptide: Ribosome-recycling factor (185 aa).

It belongs to the RRF family.

It is found in the cytoplasm. Its function is as follows. Responsible for the release of ribosomes from messenger RNA at the termination of protein biosynthesis. May increase the efficiency of translation by recycling ribosomes from one round of translation to another. The chain is Ribosome-recycling factor from Shewanella piezotolerans (strain WP3 / JCM 13877).